Here is a 716-residue protein sequence, read N- to C-terminus: 1,4-alpha-glucan branching enzyme GlgB (716 aa).

The active-site Nucleophile is D399. The active-site Proton donor is E452.

Belongs to the glycosyl hydrolase 13 family. GlgB subfamily. Monomer.

It carries out the reaction Transfers a segment of a (1-&gt;4)-alpha-D-glucan chain to a primary hydroxy group in a similar glucan chain.. Its pathway is glycan biosynthesis; glycogen biosynthesis. Functionally, catalyzes the formation of the alpha-1,6-glucosidic linkages in glycogen by scission of a 1,4-alpha-linked oligosaccharide from growing alpha-1,4-glucan chains and the subsequent attachment of the oligosaccharide to the alpha-1,6 position. The chain is 1,4-alpha-glucan branching enzyme GlgB from Rhodopseudomonas palustris (strain HaA2).